The chain runs to 154 residues: SsrA-binding protein (154 aa).

It belongs to the SmpB family.

It localises to the cytoplasm. Functionally, required for rescue of stalled ribosomes mediated by trans-translation. Binds to transfer-messenger RNA (tmRNA), required for stable association of tmRNA with ribosomes. tmRNA and SmpB together mimic tRNA shape, replacing the anticodon stem-loop with SmpB. tmRNA is encoded by the ssrA gene; the 2 termini fold to resemble tRNA(Ala) and it encodes a 'tag peptide', a short internal open reading frame. During trans-translation Ala-aminoacylated tmRNA acts like a tRNA, entering the A-site of stalled ribosomes, displacing the stalled mRNA. The ribosome then switches to translate the ORF on the tmRNA; the nascent peptide is terminated with the 'tag peptide' encoded by the tmRNA and targeted for degradation. The ribosome is freed to recommence translation, which seems to be the essential function of trans-translation. This is SsrA-binding protein from Synechococcus sp. (strain JA-3-3Ab) (Cyanobacteria bacterium Yellowstone A-Prime).